The following is a 71-amino-acid chain: Exodeoxyribonuclease 7 small subunit (71 aa).

Belongs to the XseB family. Heterooligomer composed of large and small subunits.

It is found in the cytoplasm. The enzyme catalyses Exonucleolytic cleavage in either 5'- to 3'- or 3'- to 5'-direction to yield nucleoside 5'-phosphates.. Bidirectionally degrades single-stranded DNA into large acid-insoluble oligonucleotides, which are then degraded further into small acid-soluble oligonucleotides. The chain is Exodeoxyribonuclease 7 small subunit from Streptococcus uberis (strain ATCC BAA-854 / 0140J).